Here is a 295-residue protein sequence, read N- to C-terminus: Deleted in azoospermia-like (295 aa).

Residues 1 to 10 (MSAANPETPN) are compositionally biased toward polar residues. A disordered region spans residues 1–25 (MSAANPETPNSTISREASTQSSSAA). Positions 11-25 (STISREASTQSSSAA) are enriched in low complexity. In terms of domain architecture, RRM spans 40–115 (NTVFVGGIDV…KKLKLGPAIR (76 aa)). The homodimerization stretch occupies residues 80 to 132 (KGYGFVSFFNDVDVQKIVESQINFHGKKLKLGPAIRKQNLCAYHVQPRPLVFN). Residues 167–190 (AYPTYPNSPVQVITGYQLPVYNYQ) enclose the DAZ domain. Tyr-276 carries the post-translational modification Phosphotyrosine.

Belongs to the RRM DAZ family. Homodimer and heterodimer. Forms a heterodimer with DAZ. Interacts with BOLL, DAZAP1 and DAZAP2. Interacts with PUM2 Multiple DAZL RRMs can bind to a single RNA containing multiple GUU triplets. As to expression, testis specific.

The protein resides in the cytoplasm. It localises to the nucleus. RNA-binding protein, which is essential for gametogenesis in both males and females. Plays a central role during spermatogenesis. Acts by binding to the 3'-UTR of mRNA, specifically recognizing GUU triplets, and thereby regulating the translation of key transcripts. This chain is Deleted in azoospermia-like (DAZL), found in Macaca fascicularis (Crab-eating macaque).